The following is a 233-amino-acid chain: Protease inhibitor Egf1.0 (233 aa).

The N-terminal stretch at 1-28 (MYIDTGIMSNNIFLFAFFALVGLTRIEA) is a signal peptide. Residues 52 to 104 (CRENEHYNSTRIECEEECNDRNNKLCYRFQQFCWCNEGYIRNSSHICVKLEDC) enclose the TIL domain. Positions 201–233 (FGKPKNSSAEKKPLETETQAQKFNGIIDQETLD) are disordered.

This sequence belongs to the polydnaviridae EGF-like motif protein family. As to quaternary structure, interacts with host PAP1 and PAP3.

Its function is as follows. Counteracts the host humoral immune response by inhibiting the processing and the amidolytic activity of host PAP3. Thereby, melanization of host hemolymph, normally producing several reactive intermediates toxic for viruses, is deregulated and proper immune response cannot occur. This is Protease inhibitor Egf1.0 (O12) from Microplitis demolitor (Parasitoid wasp).